The following is a 53-amino-acid chain: HOXB-AS3 peptide (53 aa).

Residues 1–53 (MPVLPGTQRYPHQRRRFQAAGGGAESGKRGSEEAPGVAWSGSESGRDAATPAW) are disordered.

In terms of assembly, interacts with HNRNPA1 (via the RGG-box). Interacts with IGF2BP2.

In terms of biological role, blocks the binding of HNRNPA1 to the intronic sequences flanking exon 9 of the PKM gene by competitively binding to the HNRNPA1 RGG-box motif. This inhibits inclusion of exon 9 and promotes inclusion of exon 10, suppressing formation of the PKM M2 isoform and promoting production of the M1 isoform. Also suppresses HNRNPA1-mediated processing of microRNA 18a (miR-18a). Promotes MYC stability through interaction with IGF2BP2. The sequence is that of HOXB-AS3 peptide from Homo sapiens (Human).